We begin with the raw amino-acid sequence, 364 residues long: Large ribosomal subunit protein uL22m (364 aa).

It belongs to the universal ribosomal protein uL22 family. Component of the mitochondrial large ribosomal subunit (mt-LSU). Mature N.crassa 74S mitochondrial ribosomes consist of a small (37S) and a large (54S) subunit. The 37S small subunit contains a 16S ribosomal RNA (16S mt-rRNA) and 32 different proteins. The 54S large subunit contains a 23S rRNA (23S mt-rRNA) and 42 different proteins. uL22m forms the wall of the exit tunnel.

Its subcellular location is the mitochondrion. Component of the mitochondrial ribosome (mitoribosome), a dedicated translation machinery responsible for the synthesis of mitochondrial genome-encoded proteins, including at least some of the essential transmembrane subunits of the mitochondrial respiratory chain. The mitoribosomes are attached to the mitochondrial inner membrane and translation products are cotranslationally integrated into the membrane. This chain is Large ribosomal subunit protein uL22m (mrpl22), found in Neurospora crassa (strain ATCC 24698 / 74-OR23-1A / CBS 708.71 / DSM 1257 / FGSC 987).